Reading from the N-terminus, the 345-residue chain is S-adenosylmethionine:tRNA ribosyltransferase-isomerase (345 aa).

It belongs to the QueA family. In terms of assembly, monomer.

It is found in the cytoplasm. The enzyme catalyses 7-aminomethyl-7-carbaguanosine(34) in tRNA + S-adenosyl-L-methionine = epoxyqueuosine(34) in tRNA + adenine + L-methionine + 2 H(+). The protein operates within tRNA modification; tRNA-queuosine biosynthesis. Its function is as follows. Transfers and isomerizes the ribose moiety from AdoMet to the 7-aminomethyl group of 7-deazaguanine (preQ1-tRNA) to give epoxyqueuosine (oQ-tRNA). This Aromatoleum aromaticum (strain DSM 19018 / LMG 30748 / EbN1) (Azoarcus sp. (strain EbN1)) protein is S-adenosylmethionine:tRNA ribosyltransferase-isomerase.